We begin with the raw amino-acid sequence, 507 residues long: Protoheme IX farnesyltransferase, mitochondrial (507 aa).

Low complexity predominate over residues 72–90 (STSASASTTHDSTLSSSPT). Residues 72-136 (STSASASTTH…RGEKPLPPDA (65 aa)) form a disordered region. Residues 99–111 (KDHKIAPHRKRQA) show a composition bias toward basic residues. 8 consecutive transmembrane segments (helical) span residues 166–186 (LTML…VPEM), 199–219 (PLTL…ANAL), 248–268 (AAVL…YFGV), 270–290 (PTVS…YTPL), 298–318 (TWIG…AAAG), 339–359 (IGGW…FMAL), 392–412 (FVFI…WSFA), and 441–461 (GLFW…LLHK).

The protein belongs to the UbiA prenyltransferase family.

It is found in the mitochondrion membrane. It catalyses the reaction heme b + (2E,6E)-farnesyl diphosphate + H2O = Fe(II)-heme o + diphosphate. Its function is as follows. Converts protoheme IX and farnesyl diphosphate to heme O. This is Protoheme IX farnesyltransferase, mitochondrial (COX10) from Gibberella zeae (strain ATCC MYA-4620 / CBS 123657 / FGSC 9075 / NRRL 31084 / PH-1) (Wheat head blight fungus).